We begin with the raw amino-acid sequence, 396 residues long: Na(+)/H(+) antiporter NhaA 1 (396 aa).

Transmembrane regions (helical) follow at residues 15–35 (AGIF…VGFL), 60–80 (LEFW…GLEL), 96–116 (FLPS…FAVI), 126–146 (GWAI…ALLG), 155–175 (IFVL…IALF), 179–199 (ALNF…LVMC), 207–227 (IPFV…GIHA), 255–275 (SLGY…NAGV), 290–312 (PLGV…SWFL), 329–349 (LYAV…VDNL), and 363–383 (LAIL…AKAV).

Belongs to the NhaA Na(+)/H(+) (TC 2.A.33) antiporter family.

The protein resides in the cell inner membrane. It carries out the reaction Na(+)(in) + 2 H(+)(out) = Na(+)(out) + 2 H(+)(in). Its function is as follows. Na(+)/H(+) antiporter that extrudes sodium in exchange for external protons. The chain is Na(+)/H(+) antiporter NhaA 1 from Campylobacter hominis (strain ATCC BAA-381 / DSM 21671 / CCUG 45161 / LMG 19568 / NCTC 13146 / CH001A).